The following is a 620-amino-acid chain: Proline--tRNA ligase (620 aa).

Belongs to the class-II aminoacyl-tRNA synthetase family. ProS type 1 subfamily. Homodimer.

The protein localises to the cytoplasm. The catalysed reaction is tRNA(Pro) + L-proline + ATP = L-prolyl-tRNA(Pro) + AMP + diphosphate. In terms of biological role, catalyzes the attachment of proline to tRNA(Pro) in a two-step reaction: proline is first activated by ATP to form Pro-AMP and then transferred to the acceptor end of tRNA(Pro). As ProRS can inadvertently accommodate and process non-cognate amino acids such as alanine and cysteine, to avoid such errors it has two additional distinct editing activities against alanine. One activity is designated as 'pretransfer' editing and involves the tRNA(Pro)-independent hydrolysis of activated Ala-AMP. The other activity is designated 'posttransfer' editing and involves deacylation of mischarged Ala-tRNA(Pro). The misacylated Cys-tRNA(Pro) is not edited by ProRS. This chain is Proline--tRNA ligase, found in Streptococcus thermophilus (strain ATCC BAA-491 / LMD-9).